We begin with the raw amino-acid sequence, 385 residues long: 3-dehydroquinate synthase (385 aa).

Residues 122–126 (GVIGD), 146–147 (TT), Lys-159, and Lys-168 each bind NAD(+). Positions 201, 264, and 282 each coordinate Zn(2+).

It belongs to the sugar phosphate cyclases superfamily. Dehydroquinate synthase family. Co(2+) is required as a cofactor. Requires Zn(2+) as cofactor. NAD(+) serves as cofactor.

It localises to the cytoplasm. The catalysed reaction is 7-phospho-2-dehydro-3-deoxy-D-arabino-heptonate = 3-dehydroquinate + phosphate. It functions in the pathway metabolic intermediate biosynthesis; chorismate biosynthesis; chorismate from D-erythrose 4-phosphate and phosphoenolpyruvate: step 2/7. Catalyzes the conversion of 3-deoxy-D-arabino-heptulosonate 7-phosphate (DAHP) to dehydroquinate (DHQ). This is 3-dehydroquinate synthase from Rhodospirillum rubrum (strain ATCC 11170 / ATH 1.1.1 / DSM 467 / LMG 4362 / NCIMB 8255 / S1).